Here is a 55-residue protein sequence, read N- to C-terminus: Protein CADMIUM TOLERANCE 1 (55 aa).

A helical membrane pass occupies residues 24 to 40 (GCLYACIFTALCCFCCY).

Belongs to the CYSTM1 family.

Its subcellular location is the cell membrane. It is found in the secreted. The protein localises to the cell wall. Functionally, confers resistance to heavy metal ions (e.g. cadmium (CdCl(2)) and copper (CuCl(2))) by chelating them at the plasma membrane of root cells, thus stopping their entry and reducing their accumulation. The sequence is that of Protein CADMIUM TOLERANCE 1 from Digitaria ciliaris (Southern crabgrass).